The chain runs to 397 residues: Glycine betaine/carnitine transport ATP-binding protein GbuA (397 aa).

Residues 28 to 264 (KSKTDILKET…PANEYVEKFI (237 aa)) enclose the ABC transporter domain. 60–67 (GLSGSGKS) provides a ligand contact to ATP. CBS domains follow at residues 279 to 335 (MIRP…NITS) and 340 to 395 (LHRD…EVNV).

Belongs to the ABC transporter superfamily. The complex is composed of two ATP-binding proteins (GbuA), two transmembrane proteins (GbuB) and a solute-binding protein (GbuC).

It catalyses the reaction a quaternary ammonium(out) + ATP + H2O = a quaternary ammonium(in) + ADP + phosphate + H(+). With respect to regulation, the complex is activated by an osmotic gradient or by low temperature. Its function is as follows. Part of the ABC transporter complex GbuABC involved in glycine betaine uptake. Responsible for energy coupling to the transport system. Involved, with BetL and OpuC, in osmoprotection and cryoprotection of Listeria. Can also uptake carnitine when carnitine is abundant in the growth medium. The sequence is that of Glycine betaine/carnitine transport ATP-binding protein GbuA (gbuA) from Listeria monocytogenes serotype 1/2a (strain 10403S).